Reading from the N-terminus, the 487-residue chain is PPE family protein PPE10 (487 aa).

The segment covering Ala-398 to Gly-424 has biased composition (low complexity). Residues Ala-398–Glu-487 are disordered. The span at Pro-428–Arg-446 shows a compositional bias: polar residues.

This sequence belongs to the mycobacterial PPE family.

The protein resides in the secreted. Functionally, plays a major role in the integrity and stability of the capsule. The chain is PPE family protein PPE10 (PPE10) from Mycobacterium tuberculosis (strain CDC 1551 / Oshkosh).